A 344-amino-acid chain; its full sequence is tRNA N6-adenosine threonylcarbamoyltransferase (344 aa).

Residues H111 and H115 each coordinate Fe cation. Substrate-binding positions include 134–138 (LVSGG), D167, G180, D184, and N277. D305 serves as a coordination point for Fe cation.

Belongs to the KAE1 / TsaD family. Requires Fe(2+) as cofactor.

The protein resides in the cytoplasm. It carries out the reaction L-threonylcarbamoyladenylate + adenosine(37) in tRNA = N(6)-L-threonylcarbamoyladenosine(37) in tRNA + AMP + H(+). Required for the formation of a threonylcarbamoyl group on adenosine at position 37 (t(6)A37) in tRNAs that read codons beginning with adenine. Is involved in the transfer of the threonylcarbamoyl moiety of threonylcarbamoyl-AMP (TC-AMP) to the N6 group of A37, together with TsaE and TsaB. TsaD likely plays a direct catalytic role in this reaction. This Microcystis aeruginosa (strain NIES-843 / IAM M-2473) protein is tRNA N6-adenosine threonylcarbamoyltransferase.